Here is a 127-residue protein sequence, read N- to C-terminus: Aspartate 1-decarboxylase (127 aa).

S25 functions as the Schiff-base intermediate with substrate; via pyruvic acid in the catalytic mechanism. At S25 the chain carries Pyruvic acid (Ser). T57 lines the substrate pocket. The active-site Proton donor is Y58. G73 to A75 is a substrate binding site.

Belongs to the PanD family. Heterooctamer of four alpha and four beta subunits. Pyruvate serves as cofactor. In terms of processing, is synthesized initially as an inactive proenzyme, which is activated by self-cleavage at a specific serine bond to produce a beta-subunit with a hydroxyl group at its C-terminus and an alpha-subunit with a pyruvoyl group at its N-terminus.

The protein resides in the cytoplasm. The enzyme catalyses L-aspartate + H(+) = beta-alanine + CO2. It functions in the pathway cofactor biosynthesis; (R)-pantothenate biosynthesis; beta-alanine from L-aspartate: step 1/1. In terms of biological role, catalyzes the pyruvoyl-dependent decarboxylation of aspartate to produce beta-alanine. The chain is Aspartate 1-decarboxylase from Staphylococcus carnosus (strain TM300).